Consider the following 381-residue polypeptide: GDP-mannose-dependent alpha-(1-6)-phosphatidylinositol dimannoside mannosyltransferase (381 aa).

Substrate contacts are provided by residues G16, R207, 211–212 (EK), 283–287 (ETFGL), and E291.

The protein belongs to the glycosyltransferase group 1 family. Glycosyltransferase 4 subfamily.

The protein operates within phospholipid metabolism; phosphatidylinositol metabolism. Functionally, catalyzes the addition of a mannose residue from GDP-D-mannose to the position 6 of the alpha-1,6-linked mannose residue of the triacyl phosphatidylinositol dimannoside (Ac3PIM2) to generate triacyl phosphatidylinositol trimannoside (Ac3PIM3). This Mycobacterium tuberculosis (strain ATCC 25177 / H37Ra) protein is GDP-mannose-dependent alpha-(1-6)-phosphatidylinositol dimannoside mannosyltransferase (pimC).